The primary structure comprises 148 residues: Natriuretic peptide BF131 (148 aa).

The first 27 residues, 1 to 27 (MVGPSRLAGGGLLLLLLLALLPLALDG), serve as a signal peptide directing secretion. Residues 28–83 (KPAPPPQALPKDPAAASAAERIMRALLPDSKSSRPATDRMVHPEHQAGGGDTRRLQ) constitute a propeptide that is removed on maturation. 2 disordered regions span residues 54-83 (LPDS…RRLQ) and 105-127 (TSDM…PSAA). Residues 63-83 (ATDRMVHPEHQAGGGDTRRLQ) show a composition bias toward basic and acidic residues. C94 and C110 are oxidised to a cystine. A propeptide spanning residues 130–148 (AVTWLIRDLRADSKQSRAA) is cleaved from the precursor.

This sequence belongs to the natriuretic peptide family. In terms of tissue distribution, expressed by the venom gland.

The protein localises to the secreted. Functionally, natriuretic peptide that dose-dependently induces the rapid relaxation of rat aortic strips phenylephrine-precontracted. Acts by stimulating cGMP production in a dose-dependent manner (by probably activating NPR1 and/or NPR2). May also show potent hypotensive effects. The sequence is that of Natriuretic peptide BF131 from Bungarus flaviceps flaviceps (Red-headed krait).